The sequence spans 164 residues: ATP synthase subunit b 2 (164 aa).

A helical membrane pass occupies residues Thr-4–Pro-24.

This sequence belongs to the ATPase B chain family. In terms of assembly, F-type ATPases have 2 components, F(1) - the catalytic core - and F(0) - the membrane proton channel. F(1) has five subunits: alpha(3), beta(3), gamma(1), delta(1), epsilon(1). F(0) has three main subunits: a(1), b(2) and c(10-14). The alpha and beta chains form an alternating ring which encloses part of the gamma chain. F(1) is attached to F(0) by a central stalk formed by the gamma and epsilon chains, while a peripheral stalk is formed by the delta and b chains.

It is found in the cell inner membrane. F(1)F(0) ATP synthase produces ATP from ADP in the presence of a proton or sodium gradient. F-type ATPases consist of two structural domains, F(1) containing the extramembraneous catalytic core and F(0) containing the membrane proton channel, linked together by a central stalk and a peripheral stalk. During catalysis, ATP synthesis in the catalytic domain of F(1) is coupled via a rotary mechanism of the central stalk subunits to proton translocation. Its function is as follows. Component of the F(0) channel, it forms part of the peripheral stalk, linking F(1) to F(0). The sequence is that of ATP synthase subunit b 2 from Bartonella tribocorum (strain CIP 105476 / IBS 506).